A 178-amino-acid chain; its full sequence is ATP-dependent protease subunit HslV (178 aa).

Thr-7 is an active-site residue. Gly-162, Cys-165, and Thr-168 together coordinate Na(+).

It belongs to the peptidase T1B family. HslV subfamily. A double ring-shaped homohexamer of HslV is capped on each side by a ring-shaped HslU homohexamer. The assembly of the HslU/HslV complex is dependent on binding of ATP.

The protein localises to the cytoplasm. It catalyses the reaction ATP-dependent cleavage of peptide bonds with broad specificity.. With respect to regulation, allosterically activated by HslU binding. Protease subunit of a proteasome-like degradation complex believed to be a general protein degrading machinery. The chain is ATP-dependent protease subunit HslV from Dechloromonas aromatica (strain RCB).